Here is a 371-residue protein sequence, read N- to C-terminus: uncharacterized protein (371 aa).

Positions 20-250 constitute an ABC transporter domain; sequence VTIRNVTKRY…PANIFVAGFI (231 aa). 52-59 is an ATP binding site; sequence GPSGCGKS.

It belongs to the ABC transporter superfamily.

The protein localises to the cell inner membrane. Its function is as follows. Probably part of a binding-protein-dependent transport system y4oPQRS. This system probably transports a sugar-like molecule. Probably responsible for energy coupling to the transport system. This is an uncharacterized protein from Sinorhizobium fredii (strain NBRC 101917 / NGR234).